The following is a 317-amino-acid chain: Small ribosomal subunit biogenesis GTPase RsgA (317 aa).

The region spanning 88–249 is the CP-type G domain; the sequence is DQYKSKLFAA…LIDSPGFQEF (162 aa). GTP contacts are provided by residues 136-139 and 190-198; these read NKID and GQSGMGKST. Zn(2+) is bound by residues cysteine 273, cysteine 278, histidine 280, and cysteine 286.

It belongs to the TRAFAC class YlqF/YawG GTPase family. RsgA subfamily. Monomer. Associates with 30S ribosomal subunit, binds 16S rRNA. Requires Zn(2+) as cofactor.

The protein resides in the cytoplasm. One of several proteins that assist in the late maturation steps of the functional core of the 30S ribosomal subunit. Helps release RbfA from mature subunits. May play a role in the assembly of ribosomal proteins into the subunit. Circularly permuted GTPase that catalyzes slow GTP hydrolysis, GTPase activity is stimulated by the 30S ribosomal subunit. This chain is Small ribosomal subunit biogenesis GTPase RsgA, found in Paraburkholderia phymatum (strain DSM 17167 / CIP 108236 / LMG 21445 / STM815) (Burkholderia phymatum).